We begin with the raw amino-acid sequence, 590 residues long: Melanophilin (590 aa).

The RabBD domain occupies 4 to 124; the sequence is RLDLSTLTDE…IGSLEWYYQH (121 aa). Residues 64–107 form an FYVE-type zinc finger; the sequence is CARCLQPYRLLLNSRRQCLECSLFVCKSCSHAHPEEQGWLCDPC. Disordered regions lie at residues 147–182, 215–276, 311–335, 361–472, and 485–590; these read GGGG…PLNS, SVPE…AELD, DTSD…ARTV, VLPP…SEIS, and GLTV…AQQP. Positions 154–172 are enriched in acidic residues; sequence SLEEGNGDSEQTDEDGDLD. Residues 215–238 are compositionally biased toward polar residues; sequence SVPESAHSLQSLSGEPYSEDTTSL. Positions 339-485 form a coiled coil; that stretch reads QILELNKRMS…SRIAALRAAG (147 aa). Positions 391-401 are enriched in low complexity; the sequence is LTSNISGSSTS. The segment covering 424-433 has biased composition (basic and acidic residues); that stretch reads GHMETQERNP.

As to quaternary structure, binds RAB27A that has been activated by GTP-binding via its N-terminus. Binds MYO5A via its C-terminal coiled coil domain. In terms of tissue distribution, highly expressed in embryos at day 7; not detectable at day 11. Highly expressed in adult stomach; detected at lower levels in kidney, lung, skin and small intestine. Detected in melanocytes.

It localises to the melanosome. In terms of biological role, rab effector protein involved in melanosome transport. Serves as link between melanosome-bound RAB27A and the motor protein MYO5A. This Mus musculus (Mouse) protein is Melanophilin (Mlph).